The sequence spans 100 residues: uncharacterized protein (100 aa).

This is an uncharacterized protein from Mycoplasma pneumoniae (strain ATCC 29342 / M129 / Subtype 1) (Mycoplasmoides pneumoniae).